The sequence spans 273 residues: Sulfur carrier protein FdhD (273 aa).

Cysteine 124 functions as the Cysteine persulfide intermediate in the catalytic mechanism. Residue 263-268 (FCRQSR) coordinates Mo-bis(molybdopterin guanine dinucleotide).

Belongs to the FdhD family.

The protein resides in the cytoplasm. Its function is as follows. Required for formate dehydrogenase (FDH) activity. Acts as a sulfur carrier protein that transfers sulfur from IscS to the molybdenum cofactor prior to its insertion into FDH. In Acinetobacter baylyi (strain ATCC 33305 / BD413 / ADP1), this protein is Sulfur carrier protein FdhD.